Here is a 319-residue protein sequence, read N- to C-terminus: Nucleotide-binding protein Mvan_2698 (319 aa).

The span at 1-12 (MTEQGMHQELRE) shows a compositional bias: basic and acidic residues. Residues 1 to 26 (MTEQGMHQELREGAGTAGDEGGLEAA) are disordered. Residue 43 to 50 (GLSGAGRG) coordinates ATP. 94–97 (DVRS) contacts GTP.

This sequence belongs to the RapZ-like family.

Its function is as follows. Displays ATPase and GTPase activities. This Mycolicibacterium vanbaalenii (strain DSM 7251 / JCM 13017 / BCRC 16820 / KCTC 9966 / NRRL B-24157 / PYR-1) (Mycobacterium vanbaalenii) protein is Nucleotide-binding protein Mvan_2698.